The chain runs to 120 residues: NAD(P)H-quinone oxidoreductase subunit 3 (120 aa).

Transmembrane regions (helical) follow at residues phenylalanine 10–isoleucine 30, methionine 64–valine 84, and leucine 89–alanine 109.

This sequence belongs to the complex I subunit 3 family. NDH-1 can be composed of about 15 different subunits; different subcomplexes with different compositions have been identified which probably have different functions.

It localises to the cellular thylakoid membrane. It catalyses the reaction a plastoquinone + NADH + (n+1) H(+)(in) = a plastoquinol + NAD(+) + n H(+)(out). The enzyme catalyses a plastoquinone + NADPH + (n+1) H(+)(in) = a plastoquinol + NADP(+) + n H(+)(out). Functionally, NDH-1 shuttles electrons from an unknown electron donor, via FMN and iron-sulfur (Fe-S) centers, to quinones in the respiratory and/or the photosynthetic chain. The immediate electron acceptor for the enzyme in this species is believed to be plastoquinone. Couples the redox reaction to proton translocation, and thus conserves the redox energy in a proton gradient. Cyanobacterial NDH-1 also plays a role in inorganic carbon-concentration. This chain is NAD(P)H-quinone oxidoreductase subunit 3, found in Prochlorococcus marinus (strain AS9601).